Consider the following 418-residue polypeptide: MIHSLFLINCSGDIFLEKHWKSVVSQSVCDYFFEAQEKAADVENVPPVISTPHHYLISIYRDKLFFVSVIQTEVPPLFVIEFLHRVADTFQDYFGECSEAAIKDNVVIVYELLEEMLDNGFPLATESNILKELIKPPTILRSVVNSITGSSNVGDTLPTGQLSNIPWRRAGVKYTNNEAYFDVVEEIDAIIDKSGSTVFAEIQGVIDACIKLSGMPDLSLSFMNPRLLDDVSFHPCIRFKRWESERVLSFIPPDGNFRLISYRVSSQNLVAIPVYVKHSISFKENSSCGRFDITIGPKQNMGKTIEGITVTVHMPKVVLNMNLTPTQGSYTFDPVTKVLAWDVGKITPQKLPSLKGLVNLQSGAPKPEENPNLNIQFKIQQLAISGLKVNRLDMYGEKYKPFKGVKYVTKAGKFQVRT.

Residues 176-417 form the MHD domain; the sequence is NNEAYFDVVE…VTKAGKFQVR (242 aa).

This sequence belongs to the adaptor complexes medium subunit family. In terms of assembly, adaptor protein complex 3 (AP-3) is a heterotetramer composed of two large adaptins (delta-type subunit AP3D1 and beta-type subunit AP3B1 or AP3B2), a medium adaptin (mu-type subunit AP3M1 or AP3M2) and a small adaptin (sigma-type subunit APS1 or AP3S2). Interacts with AGAP1. AP-3 associates with the BLOC-1 complex.

The protein localises to the golgi apparatus. The protein resides in the cytoplasmic vesicle membrane. Functionally, part of the AP-3 complex, an adaptor-related complex which is not clathrin-associated. The complex is associated with the Golgi region as well as more peripheral structures. It facilitates the budding of vesicles from the Golgi membrane and may be directly involved in trafficking to lysosomes. In concert with the BLOC-1 complex, AP-3 is required to target cargos into vesicles assembled at cell bodies for delivery into neurites and nerve terminals. The sequence is that of AP-3 complex subunit mu-1 (Ap3m1) from Mus musculus (Mouse).